Reading from the N-terminus, the 505-residue chain is MAPINIEGNDFWMIACTVIIVFALVKFMFSKISFYQSANTTEWPAGPKTLPIIGNLHQLGGGVPLQVALANLAKVYGGAFTIWIGSWVPMIVISDIDNAREVLVNKSADYSARDVPDILKIITANGKNIADCDSGPFWHNLKKGLQSCINPSNVMSLSRLQEKDMQNLIKSMQERASQHNGIIKPLDHAKEASMRLLSRVIFGHDFSNEDLVIGVKDALDEMVRISGLASLADAFKIAKYLPSQRKNIRDMYATRDRVYNLIQPHIVPNLPANSFLYFLTSQDYSDEIIYSMVLEIFGLGVDSTAATAVWALSFLVGEQEIQEKLYREINNRTGGQRPVKVVDLKELPYLQAVMKETLRMKPIAPLAVPHVAAKDTTFKGRRIVKGTKVMVNLYAIHHDPNVFPAPYKFMPERFLKDVNSDGRFGDINTMESSLIPFGAGMRICGGVELAKQMVAFALASMVNEFKWDCVSEGKLPDLSEAISFILYMKNPLEAKITPRTKPFRQ.

Residues 10 to 30 form a helical membrane-spanning segment; that stretch reads DFWMIACTVIIVFALVKFMFS. Cys-444 lines the heme pocket.

The protein belongs to the cytochrome P450 family. It depends on heme as a cofactor.

The protein resides in the endoplasmic reticulum membrane. The enzyme catalyses (R)-reticuline + reduced [NADPH--hemoprotein reductase] + O2 = salutaridine + oxidized [NADPH--hemoprotein reductase] + 2 H2O + H(+). In terms of biological role, cytochrome P450 monooxygenase involved in biosynthesis of morphinan-type benzylisoquinoline and opiate alkaloids natural products. Catalyzes the formation of the morphinan alkaloid salutaridine by intramolecular phenol oxidation of (R)-reticuline without the incorporation of oxygen into the product. Can also use (R)-norreticuline as substrate. The polypeptide is Salutaridine synthase (Papaver somniferum (Opium poppy)).